We begin with the raw amino-acid sequence, 383 residues long: MDRTCEERPAEDGSDEEDPDSMEAPTRIRDTPEDIVLEAPASGLAFHPARDLLAAGDVDGDVFVFSYSCQEGETKELWSSGHHLKACRAVAFSEDGQKLVTVSKDKAIHVLDVEQGRLERRISKAHGAPINSLLLVDENVLATGDDMGGIRLWDQRKEGPLMDMRQHEEYIADMALDPAKKLLLTASGDGCLGVFNIKRRRFELLSEPQSGDLTSVTLMKCGKKVACGSSEGTIYLFNWNGFGATSDRFALRAESIDCMVPVTESLLCTGSTDGVIRAVNILPNRVVGSVGQHTGEPVGELALSHCGRFLASSGHDQRLKFWDMAQLRAVVVDDYRQRKKKGGPLRALSSKTWSTDDFFAGLREEGEDSMAQEEKEETGDDSD.

Positions 1–11 are enriched in basic and acidic residues; the sequence is MDRTCEERPAE. A disordered region spans residues 1 to 33; sequence MDRTCEERPAEDGSDEEDPDSMEAPTRIRDTPE. The segment covering 12 to 21 has biased composition (acidic residues); the sequence is DGSDEEDPDS. Ser-14 carries the post-translational modification Phosphoserine. WD repeat units follow at residues 36 to 75, 82 to 121, 125 to 163, 166 to 205, 208 to 247, 250 to 289, and 293 to 332; these read VLEAPASGLAFHPARDLLAAGDVDGDVFVFSYSCQEGETK, HHLKACRAVAFSEDGQKLVTVSKDKAIHVLDVEQGRLERR, AHGAPINSLLLVDENVLATGDDMGGIRLWDQRKEGPLMD, QHEEYIADMALDPAKKLLLTASGDGCLGVFNIKRRRFELL, PQSGDLTSVTLMKCGKKVACGSSEGTIYLFNWNGFGATSD, ALRAESIDCMVPVTESLLCTGSTDGVIRAVNILPNRVVGS, and HTGEPVGELALSHCGRFLASSGHDQRLKFWDMAQLRAVVV. At Ser-354 the chain carries Phosphoserine. A disordered region spans residues 362-383; that stretch reads LREEGEDSMAQEEKEETGDDSD. The span at 365–383 shows a compositional bias: acidic residues; it reads EGEDSMAQEEKEETGDDSD. Residue Thr-378 is modified to Phosphothreonine. A Phosphoserine modification is found at Ser-382.

It belongs to the WD repeat WDR55 family.

It is found in the nucleus. The protein resides in the nucleolus. It localises to the cytoplasm. In terms of biological role, nucleolar protein that acts as a modulator of rRNA synthesis. Plays a central role during organogenesis. This Pongo abelii (Sumatran orangutan) protein is WD repeat-containing protein 55 (WDR55).